A 61-amino-acid chain; its full sequence is Small ribosomal subunit protein uS14 (61 aa).

Residues Cys24, Cys27, Cys40, and Cys43 each coordinate Zn(2+).

Belongs to the universal ribosomal protein uS14 family. Zinc-binding uS14 subfamily. In terms of assembly, part of the 30S ribosomal subunit. Contacts proteins S3 and S10. Zn(2+) serves as cofactor.

Functionally, binds 16S rRNA, required for the assembly of 30S particles and may also be responsible for determining the conformation of the 16S rRNA at the A site. The protein is Small ribosomal subunit protein uS14 of Mycobacterium avium (strain 104).